Reading from the N-terminus, the 115-residue chain is Tyrosine-protein phosphatase 18 (115 aa).

In terms of domain architecture, Tyrosine-protein phosphatase spans 1 to 115; it reads WLMIVEQKCR…ETGSDAPMVV (115 aa). Aspartate 83 contributes to the substrate binding site.

The protein belongs to the protein-tyrosine phosphatase family.

The catalysed reaction is O-phospho-L-tyrosyl-[protein] + H2O = L-tyrosyl-[protein] + phosphate. This chain is Tyrosine-protein phosphatase 18 (STY-18), found in Styela plicata (Wrinkled sea squirt).